The primary structure comprises 375 residues: Chaperone protein DnaJ (375 aa).

The J domain maps to 5 to 70 (DYYEVLGVAR…NKRRAYDAHG (66 aa)). The CR-type zinc finger occupies 131-208 (GIERRIEIPT…CHGAGRVEED (78 aa)). 8 residues coordinate Zn(2+): cysteine 144, cysteine 147, cysteine 160, cysteine 163, cysteine 182, cysteine 185, cysteine 196, and cysteine 199. CXXCXGXG motif repeat units follow at residues 144-151 (CAPCHGSG), 160-167 (CGTCHGRG), 182-189 (CPHCDGRG), and 196-203 (CKTCHGAG).

The protein belongs to the DnaJ family. In terms of assembly, homodimer. It depends on Zn(2+) as a cofactor.

It is found in the cytoplasm. In terms of biological role, participates actively in the response to hyperosmotic and heat shock by preventing the aggregation of stress-denatured proteins and by disaggregating proteins, also in an autonomous, DnaK-independent fashion. Unfolded proteins bind initially to DnaJ; upon interaction with the DnaJ-bound protein, DnaK hydrolyzes its bound ATP, resulting in the formation of a stable complex. GrpE releases ADP from DnaK; ATP binding to DnaK triggers the release of the substrate protein, thus completing the reaction cycle. Several rounds of ATP-dependent interactions between DnaJ, DnaK and GrpE are required for fully efficient folding. Also involved, together with DnaK and GrpE, in the DNA replication of plasmids through activation of initiation proteins. The sequence is that of Chaperone protein DnaJ from Xanthomonas euvesicatoria pv. vesicatoria (strain 85-10) (Xanthomonas campestris pv. vesicatoria).